The chain runs to 51 residues: Ribosome biogenesis protein Nop10 (51 aa).

The protein belongs to the NOP10 family.

Involved in ribosome biogenesis; more specifically in 18S rRNA pseudouridylation and in cleavage of pre-rRNA. The sequence is that of Ribosome biogenesis protein Nop10 from Methanosarcina barkeri (strain Fusaro / DSM 804).